Reading from the N-terminus, the 276-residue chain is Large ribosomal subunit protein uL2 (276 aa).

Disordered stretches follow at residues 1 to 50 (MPIK…GRVT) and 206 to 276 (GKAG…SKKR). Residues 7–19 (RPTTPTRRFQTVV) are compositionally biased toward polar residues. The span at 20–38 (SREDITKQTPEKSLVESKK) shows a compositional bias: basic and acidic residues.

The protein belongs to the universal ribosomal protein uL2 family. In terms of assembly, part of the 50S ribosomal subunit. Forms a bridge to the 30S subunit in the 70S ribosome.

Its function is as follows. One of the primary rRNA binding proteins. Required for association of the 30S and 50S subunits to form the 70S ribosome, for tRNA binding and peptide bond formation. It has been suggested to have peptidyltransferase activity; this is somewhat controversial. Makes several contacts with the 16S rRNA in the 70S ribosome. This chain is Large ribosomal subunit protein uL2, found in Solibacter usitatus (strain Ellin6076).